A 431-amino-acid chain; its full sequence is Phosphomethylpyrimidine synthase (431 aa).

Substrate contacts are provided by residues Asn-66, Met-95, Tyr-124, His-163, 185–187, 226–229, and Glu-265; these read SRG and DGLR. A Zn(2+)-binding site is contributed by His-269. Substrate is bound at residue Tyr-292. His-333 contacts Zn(2+). [4Fe-4S] cluster contacts are provided by Cys-408, Cys-411, and Cys-415.

This sequence belongs to the ThiC family. The cofactor is [4Fe-4S] cluster.

It carries out the reaction 5-amino-1-(5-phospho-beta-D-ribosyl)imidazole + S-adenosyl-L-methionine = 4-amino-2-methyl-5-(phosphooxymethyl)pyrimidine + CO + 5'-deoxyadenosine + formate + L-methionine + 3 H(+). It functions in the pathway cofactor biosynthesis; thiamine diphosphate biosynthesis. Functionally, catalyzes the synthesis of the hydroxymethylpyrimidine phosphate (HMP-P) moiety of thiamine from aminoimidazole ribotide (AIR) in a radical S-adenosyl-L-methionine (SAM)-dependent reaction. The chain is Phosphomethylpyrimidine synthase from Dehalococcoides mccartyi (strain ATCC BAA-2100 / JCM 16839 / KCTC 5957 / BAV1).